The primary structure comprises 609 residues: UvrABC system protein C (609 aa).

Residues 19-97 (ASPGCYLWKS…IKKHNPRFNV (79 aa)) form the GIY-YIG domain. The UVR domain occupies 208-243 (ESLVSDLNIKMSNASERLDFEKAARYRDMLQRIQNF).

This sequence belongs to the UvrC family. In terms of assembly, interacts with UvrB in an incision complex.

It localises to the cytoplasm. In terms of biological role, the UvrABC repair system catalyzes the recognition and processing of DNA lesions. UvrC both incises the 5' and 3' sides of the lesion. The N-terminal half is responsible for the 3' incision and the C-terminal half is responsible for the 5' incision. In Leptospira interrogans serogroup Icterohaemorrhagiae serovar Lai (strain 56601), this protein is UvrABC system protein C.